The sequence spans 29 residues: Cyclotide mden-C (29 aa).

A cross-link (cyclopeptide (Gly-Asn)) is located at residues 1-29; the sequence is GKPICGETCFKGKCYTPGCTCSYPVCKKN. 3 cysteine pairs are disulfide-bonded: cysteine 5-cysteine 19, cysteine 9-cysteine 21, and cysteine 14-cysteine 26.

It belongs to the cyclotide family. Post-translationally, this is a cyclic peptide.

In terms of biological role, probably participates in a plant defense mechanism. This chain is Cyclotide mden-C, found in Melicytus dentatus (Tree violet).